A 309-amino-acid chain; its full sequence is NAD-dependent protein deacylase sirtuin-5A, mitochondrial (309 aa).

Residues 1 to 35 (MILLTFHTRRLVSHAYCGLKPASQKKSIALEMTRP) constitute a mitochondrion transit peptide. Residues 36–306 (SSNLADFREA…PPALARHETE (271 aa)) form the Deacetylase sirtuin-type domain. An NAD(+)-binding site is contributed by 57–76 (GAGVSAESGVPTFRGAGGYW). Substrate-binding residues include Y101 and R104. 139-142 (QNID) provides a ligand contact to NAD(+). H157 (proton acceptor) is an active-site residue. 4 residues coordinate Zn(2+): C165, C168, C206, and C211. NAD(+) contacts are provided by residues 248 to 250 (GTS), 274 to 276 (NME), and C292.

Belongs to the sirtuin family. Class III subfamily. The cofactor is Zn(2+).

It is found in the mitochondrion. The protein resides in the cytoplasm. Its subcellular location is the cytosol. It localises to the nucleus. It carries out the reaction N(6)-malonyl-L-lysyl-[protein] + NAD(+) + H2O = 2''-O-malonyl-ADP-D-ribose + nicotinamide + L-lysyl-[protein]. The enzyme catalyses N(6)-succinyl-L-lysyl-[protein] + NAD(+) + H2O = 2''-O-succinyl-ADP-D-ribose + nicotinamide + L-lysyl-[protein]. It catalyses the reaction N(6)-glutaryl-L-lysyl-[protein] + NAD(+) + H2O = 2''-O-glutaryl-ADP-D-ribose + nicotinamide + L-lysyl-[protein]. NAD-dependent lysine demalonylase, desuccinylase and deglutarylase that specifically removes malonyl, succinyl and glutaryl groups on target proteins. Has weak NAD-dependent protein deacetylase activity; however this activity may not be physiologically relevant in vivo. This chain is NAD-dependent protein deacylase sirtuin-5A, mitochondrial (sirt5-a), found in Xenopus laevis (African clawed frog).